The following is a 207-amino-acid chain: Protein FMP32, mitochondrial (207 aa).

The stretch at 100–136 (ADRSEFHNIQNEYESVKNDLEKLRNKLREEITKTNAG) forms a coiled coil. The chain crosses the membrane as a helical span at residues 184 to 206 (VMQWLIGVCTGTFALVLAYMRLL).

Belongs to the CCDC90 family.

The protein resides in the mitochondrion. Its subcellular location is the membrane. The chain is Protein FMP32, mitochondrial (FMP32) from Saccharomyces cerevisiae (strain ATCC 204508 / S288c) (Baker's yeast).